We begin with the raw amino-acid sequence, 1207 residues long: DNA-directed RNA polymerase subunit beta' (1207 aa).

Residues C60, C62, C75, and C78 each contribute to the Zn(2+) site. Mg(2+)-binding residues include D450, D452, and D454. Zn(2+)-binding residues include C819, C893, C900, and C903.

Belongs to the RNA polymerase beta' chain family. As to quaternary structure, the RNAP catalytic core consists of 2 alpha, 1 beta, 1 beta' and 1 omega subunit. When a sigma factor is associated with the core the holoenzyme is formed, which can initiate transcription. It depends on Mg(2+) as a cofactor. Zn(2+) serves as cofactor.

It catalyses the reaction RNA(n) + a ribonucleoside 5'-triphosphate = RNA(n+1) + diphosphate. In terms of biological role, DNA-dependent RNA polymerase catalyzes the transcription of DNA into RNA using the four ribonucleoside triphosphates as substrates. The chain is DNA-directed RNA polymerase subunit beta' from Streptococcus pyogenes serotype M3 (strain ATCC BAA-595 / MGAS315).